Reading from the N-terminus, the 106-residue chain is Small cardioactive peptide-related peptide (106 aa).

The first 20 residues, 1-20, serve as a signal peptide directing secretion; it reads MFCKHLSFVAITICFLLVLA. Residues 21-41 constitute a propeptide, amino-terminal spacer peptide; it reads KTENEIQQKNIKFDQRTWRNM. Gln52 is modified (glutamine amide). Residues 55 to 106 constitute a propeptide, carboxy-terminal spacer peptide; the sequence is SDNQPDYTCCGMPLTKYVGICPIGMECCPGLKKVLQKSGQRTIYSVCVADAY.

In terms of tissue distribution, expression is seen in the peripheral and central nervous systems in tissues such as the brain, the inferior buccal ganglion, the gastric ganglion, the olfactory lobe, the peduncle lobe and the optic lobe. Expression in the brain is distributed in the median inferior frontal lobe, the superior buccal lobe, the prebranchial lobe and the pedal lobe. Not expressed in the vasomotor lobe or the palliovisceral lobe that controls the cardiac system.

The protein resides in the secreted. Evokes contractions in the radula protractor muscle, and may regulate feeding behavior and gut motility by controlling muscle contraction of the buccal mass. This Octopus vulgaris (Common octopus) protein is Small cardioactive peptide-related peptide.